Consider the following 78-residue polypeptide: Putative defensin-like protein 288 (78 aa).

The first 21 residues, 1 to 21 (MSNLRLTIAVFLAALFQTLWW), serve as a signal peptide directing secretion.

The protein belongs to the DEFL family.

The protein localises to the secreted. The chain is Putative defensin-like protein 288 from Arabidopsis thaliana (Mouse-ear cress).